We begin with the raw amino-acid sequence, 59 residues long: Cuticle protein 7 isoform a (59 aa).

Glutamine 1 carries the pyrrolidone carboxylic acid modification.

This Limulus polyphemus (Atlantic horseshoe crab) protein is Cuticle protein 7 isoform a.